We begin with the raw amino-acid sequence, 183 residues long: Ubiquitin-conjugating enzyme E2 6 (183 aa).

In terms of domain architecture, UBC core spans 1 to 148 (MASPSKRREM…VKEYCEKYAK (148 aa)). The active-site Glycyl thioester intermediate is cysteine 85. Residues 148–183 (KPEEILSDDDDDDSMSEDGSDSDDDDDDEIVGKADP) form a disordered region. Residues 152–176 (ILSDDDDDDSMSEDGSDSDDDDDDE) are compositionally biased toward acidic residues.

The protein belongs to the ubiquitin-conjugating enzyme family. In terms of tissue distribution, expressed in roots, petals, sepals and silique walls.

It carries out the reaction S-ubiquitinyl-[E1 ubiquitin-activating enzyme]-L-cysteine + [E2 ubiquitin-conjugating enzyme]-L-cysteine = [E1 ubiquitin-activating enzyme]-L-cysteine + S-ubiquitinyl-[E2 ubiquitin-conjugating enzyme]-L-cysteine.. It participates in protein modification; protein ubiquitination. Its function is as follows. Accepts the ubiquitin from the E1 complex and catalyzes its covalent attachment to other proteins. This chain is Ubiquitin-conjugating enzyme E2 6 (UBC6), found in Arabidopsis thaliana (Mouse-ear cress).